Reading from the N-terminus, the 179-residue chain is Transmembrane protein 196 (179 aa).

Helical transmembrane passes span 11 to 31, 44 to 61, 67 to 87, and 100 to 120; these read LLVLSVLEIGLGVSSVAVGAV, LGDSSPFLLCGICGILCA, LVMILFSACCICGLIGGILNF, and LYPLHLASMSLACIGIGGCTL.

The protein localises to the cytoplasm. The protein resides in the membrane. Its function is as follows. Acts as a tumor suppressor in lung cancer. Inhibits tumor cell growth by inhibiting cell proliferation and migration and promoting cell apoptosis. Inhibits metastasis of lung cancer by suppressing beta-catenin expression in the Wnt/beta-catenin signaling pathway. This chain is Transmembrane protein 196 (TMEM196), found in Pongo abelii (Sumatran orangutan).